The following is a 98-amino-acid chain: Venom toxin OcyC11 (98 aa).

Residues 1 to 20 (MKIACTLVLFVMLRCYVNAR) form the signal peptide.

Contains 4 disulfide bonds. Expressed by the venom gland.

Its subcellular location is the secreted. The chain is Venom toxin OcyC11 from Opisthacanthus cayaporum (South American scorpion).